A 179-amino-acid chain; its full sequence is Peptide deformylase 2 (179 aa).

Fe cation-binding residues include cysteine 102 and histidine 144. Glutamate 145 is an active-site residue. Histidine 148 serves as a coordination point for Fe cation.

The protein belongs to the polypeptide deformylase family. The cofactor is Fe(2+).

It carries out the reaction N-terminal N-formyl-L-methionyl-[peptide] + H2O = N-terminal L-methionyl-[peptide] + formate. Removes the formyl group from the N-terminal Met of newly synthesized proteins. Requires at least a dipeptide for an efficient rate of reaction. N-terminal L-methionine is a prerequisite for activity but the enzyme has broad specificity at other positions. The polypeptide is Peptide deformylase 2 (Nostoc sp. (strain PCC 7120 / SAG 25.82 / UTEX 2576)).